A 440-amino-acid chain; its full sequence is Probable cytosolic iron-sulfur protein assembly protein 1 (440 aa).

WD repeat units follow at residues alanine 12–glycine 51, aspartate 71–glutamate 110, glycine 148–cysteine 187, glutamate 193–phenylalanine 233, glutamate 278–alanine 317, alanine 326–serine 379, and histidine 401–aspartate 440. The span at serine 107–glycine 116 shows a compositional bias: acidic residues. The segment at serine 107–glutamate 137 is disordered.

The protein belongs to the WD repeat CIA1 family.

Its function is as follows. Essential component of the cytosolic iron-sulfur (Fe/S) protein assembly machinery. Required for the maturation of extramitochondrial Fe/S proteins. In Cryptococcus neoformans var. neoformans serotype D (strain B-3501A) (Filobasidiella neoformans), this protein is Probable cytosolic iron-sulfur protein assembly protein 1.